A 466-amino-acid polypeptide reads, in one-letter code: Arginine biosynthesis bifunctional protein ArgJ, mitochondrial (466 aa).

The transit peptide at 1 to 9 (MSSLVLKRF) directs the protein to the mitochondrion. Positions 183, 209, 232, 320, 461, and 466 each coordinate substrate. Thr-232 serves as the catalytic Nucleophile.

The protein belongs to the ArgJ family. In terms of assembly, heterodimer of an alpha and a beta chain. Post-translationally, the alpha and beta chains are autoproteolytically processed from a single precursor protein within the mitochondrion.

Its subcellular location is the mitochondrion matrix. It carries out the reaction N(2)-acetyl-L-ornithine + L-glutamate = N-acetyl-L-glutamate + L-ornithine. It catalyses the reaction L-glutamate + acetyl-CoA = N-acetyl-L-glutamate + CoA + H(+). It participates in amino-acid biosynthesis; L-arginine biosynthesis; L-ornithine and N-acetyl-L-glutamate from L-glutamate and N(2)-acetyl-L-ornithine (cyclic): step 1/1. It functions in the pathway amino-acid biosynthesis; L-arginine biosynthesis; N(2)-acetyl-L-ornithine from L-glutamate: step 1/4. In terms of biological role, catalyzes two activities which are involved in the cyclic version of arginine biosynthesis: the synthesis of acetylglutamate from glutamate and acetyl-CoA, and of ornithine by transacetylation between acetylornithine and glutamate. The polypeptide is Arginine biosynthesis bifunctional protein ArgJ, mitochondrial (Laccaria bicolor (strain S238N-H82 / ATCC MYA-4686) (Bicoloured deceiver)).